A 1020-amino-acid polypeptide reads, in one-letter code: Protein translocase subunit SecA (1020 aa).

Residues Gln143, 161-165 (GEGKT), and Asp661 contribute to the ATP site. The interval 974–1020 (SVYNASPGAENEAPLQRPVTADSKPGRNDPCPCGSGKKYKNCHGQQP) is disordered. Zn(2+) is bound by residues Cys1004, Cys1006, Cys1015, and His1016.

This sequence belongs to the SecA family. Monomer and homodimer. Part of the essential Sec protein translocation apparatus which comprises SecA, SecYEG and auxiliary proteins SecDF. Other proteins may also be involved. The cofactor is Zn(2+).

The protein resides in the cell inner membrane. It localises to the cytoplasm. It catalyses the reaction ATP + H2O + cellular proteinSide 1 = ADP + phosphate + cellular proteinSide 2.. In terms of biological role, part of the Sec protein translocase complex. Interacts with the SecYEG preprotein conducting channel. Has a central role in coupling the hydrolysis of ATP to the transfer of proteins into and across the cell membrane, serving as an ATP-driven molecular motor driving the stepwise translocation of polypeptide chains across the membrane. This chain is Protein translocase subunit SecA, found in Chlorobium phaeovibrioides (strain DSM 265 / 1930) (Prosthecochloris vibrioformis (strain DSM 265)).